We begin with the raw amino-acid sequence, 320 residues long: MENRNTFSWVKEQITRSISVSIMIYVITRTSISNAYPIFAQQGYENPREATGRIVCANCHLASKPVDIEVPQAVLPDTVFEAVLRIPYDMQLKQVLANGKKGGLNVGAVLILPEGFELAPPDRISPELKEKIGNLAFQSYRPDKKNILVIGPVPGKKYSEIVFPILSPDPATKKDAHFLKYPIYVGGNRGRGQIYPDGSKSNNTVYNATSTGIVRKILRKEKGGYEISIVDASDGRQVIDIIPPGPELLVSEGESIKIDQPLTSNPNVGGFGQGDAEIVLQDPLRVQGLLFFFASVILAQVFLVLKKKQFEKVQLYEMNF.

A signal peptide spans 1–35 (MENRNTFSWVKEQITRSISVSIMIYVITRTSISNA). Positions 36, 56, 59, and 60 each coordinate heme. A helical membrane pass occupies residues 286–306 (VQGLLFFFASVILAQVFLVLK).

Belongs to the cytochrome f family. In terms of assembly, the 4 large subunits of the cytochrome b6-f complex are cytochrome b6, subunit IV (17 kDa polypeptide, petD), cytochrome f and the Rieske protein, while the 4 small subunits are PetG, PetL, PetM and PetN. The complex functions as a dimer. Heme is required as a cofactor.

It is found in the plastid. Its subcellular location is the chloroplast thylakoid membrane. Its function is as follows. Component of the cytochrome b6-f complex, which mediates electron transfer between photosystem II (PSII) and photosystem I (PSI), cyclic electron flow around PSI, and state transitions. In Hordeum vulgare (Barley), this protein is Cytochrome f.